A 522-amino-acid chain; its full sequence is Semenogelin-2 (522 aa).

The N-terminal stretch at 1 to 23 (MKSIILFVLSLLLILEKQAAVMG) is a signal peptide. Disordered regions lie at residues 26–62 (CGSK…SKGS), 132–158 (GGQA…ISSQ), 272–358 (NLNQ…ERHL), and 379–522 (EEQI…PVST). Composition is skewed to polar residues over residues 31 to 40 (QLPSGSSQFP) and 137 to 158 (RGTQ…ISSQ). Over residues 292–310 (RTEERQLNRGEKSVQKDVS) the composition is skewed to basic and acidic residues. A compositionally biased stretch (polar residues) spans 325 to 335 (KSQNQVTIHSQ). Over residues 336-345 (GQEHGHKENK) the composition is skewed to basic and acidic residues. Composition is skewed to polar residues over residues 379–397 (EEQI…SQAQ), 427–436 (KDVSQSSTSF), and 446–464 (SQIQ…QNAK). Basic and acidic residues-rich tracts occupy residues 465 to 492 (GKSD…ESSE) and 499 to 522 (TEHE…PVST).

This sequence belongs to the semenogelin family. In terms of assembly, interacts with SERPINA5.

Its subcellular location is the secreted. Functionally, participates in the formation of a gel matrix (sperm coagulum) entrapping the accessory gland secretions and ejaculated spermatozoa. The polypeptide is Semenogelin-2 (SEMG2) (Hylobates klossii (Kloss's gibbon)).